A 302-amino-acid polypeptide reads, in one-letter code: Protoheme IX farnesyltransferase 2 (302 aa).

Helical transmembrane passes span 14–34 (IIFG…QGSV), 36–56 (WWLL…GCAI), 85–105 (AALA…WFCT), 108–128 (LATG…SLYM), 133–153 (VYGT…GYCA), 163–183 (AILL…IAIF), 209–229 (IVLY…GGYA), 230–250 (GYGY…MALS), and 264–284 (QVFF…AVDG).

The protein belongs to the UbiA prenyltransferase family. Protoheme IX farnesyltransferase subfamily.

It localises to the cell inner membrane. It catalyses the reaction heme b + (2E,6E)-farnesyl diphosphate + H2O = Fe(II)-heme o + diphosphate. The protein operates within porphyrin-containing compound metabolism; heme O biosynthesis; heme O from protoheme: step 1/1. In terms of biological role, converts heme B (protoheme IX) to heme O by substitution of the vinyl group on carbon 2 of heme B porphyrin ring with a hydroxyethyl farnesyl side group. In Chromobacterium violaceum (strain ATCC 12472 / DSM 30191 / JCM 1249 / CCUG 213 / NBRC 12614 / NCIMB 9131 / NCTC 9757 / MK), this protein is Protoheme IX farnesyltransferase 2.